Here is a 135-residue protein sequence, read N- to C-terminus: C-type lectin PAL (135 aa).

Disulfide bonds link Cys-3/Cys-14, Cys-31/Cys-131, Cys-38/Cys-133, and Cys-106/Cys-123. The C-type lectin domain maps to 10–132; that stretch reads MNGLCYKIFD…CGSKNAFLCQ (123 aa). The Ca(2+) site is built by Gln-96, Asp-98, Glu-104, Asn-119, and Asp-120. The Galactose-binding motif lies at 96–98; sequence QPD.

Belongs to the true venom lectin family. Homodimer; disulfide-linked. In terms of tissue distribution, expressed by the venom gland.

The protein resides in the secreted. Functionally, galactose-binding lectin which recognizes specific carbohydrate structures and agglutinates a variety of animal cells by binding to cell-surface glycoproteins and glycolipids. This is a calcium-dependent lectin. Shows high hemagglutinating activity (MHC is 0.25 ug/ml on rabbit erythrocytes). In Bitis arietans (African puff adder), this protein is C-type lectin PAL.